A 216-amino-acid polypeptide reads, in one-letter code: Fibroblast growth factor 17 (216 aa).

Residues 1–22 (MGAARLLPNLTLCLQLLILCCQ) form the signal peptide. Asn-137 carries N-linked (GlcNAc...) asparagine glycosylation. The tract at residues 195 to 216 (FEFVGSAPTRRTKRTRRPQSQT) is disordered. A compositionally biased stretch (basic residues) spans 204–216 (RRTKRTRRPQSQT).

It belongs to the heparin-binding growth factors family. As to quaternary structure, interacts with FGFR3 and FGFR4.

The protein resides in the secreted. Its function is as follows. Plays an important role in the regulation of embryonic development and as signaling molecule in the induction and patterning of the embryonic brain. Required for normal brain development. This chain is Fibroblast growth factor 17 (Fgf17), found in Mus musculus (Mouse).